Reading from the N-terminus, the 103-residue chain is Large ribosomal subunit protein eL30 (103 aa).

It belongs to the eukaryotic ribosomal protein eL30 family.

In Methanothrix thermoacetophila (strain DSM 6194 / JCM 14653 / NBRC 101360 / PT) (Methanosaeta thermophila), this protein is Large ribosomal subunit protein eL30.